Consider the following 558-residue polypeptide: Dihydroxy-acid dehydratase (558 aa).

Cys51 serves as a coordination point for [2Fe-2S] cluster. Asp83 is a Mg(2+) binding site. Cys124 serves as a coordination point for [2Fe-2S] cluster. Mg(2+)-binding residues include Asp125 and Lys126. N6-carboxylysine is present on Lys126. Position 196 (Cys196) interacts with [2Fe-2S] cluster. A Mg(2+)-binding site is contributed by Glu447. Catalysis depends on Ser473, which acts as the Proton acceptor.

The protein belongs to the IlvD/Edd family. Homodimer. The cofactor is [2Fe-2S] cluster. Mg(2+) serves as cofactor.

The catalysed reaction is (2R)-2,3-dihydroxy-3-methylbutanoate = 3-methyl-2-oxobutanoate + H2O. The enzyme catalyses (2R,3R)-2,3-dihydroxy-3-methylpentanoate = (S)-3-methyl-2-oxopentanoate + H2O. It participates in amino-acid biosynthesis; L-isoleucine biosynthesis; L-isoleucine from 2-oxobutanoate: step 3/4. It functions in the pathway amino-acid biosynthesis; L-valine biosynthesis; L-valine from pyruvate: step 3/4. In terms of biological role, functions in the biosynthesis of branched-chain amino acids. Catalyzes the dehydration of (2R,3R)-2,3-dihydroxy-3-methylpentanoate (2,3-dihydroxy-3-methylvalerate) into 2-oxo-3-methylpentanoate (2-oxo-3-methylvalerate) and of (2R)-2,3-dihydroxy-3-methylbutanoate (2,3-dihydroxyisovalerate) into 2-oxo-3-methylbutanoate (2-oxoisovalerate), the penultimate precursor to L-isoleucine and L-valine, respectively. In Flavobacterium psychrophilum (strain ATCC 49511 / DSM 21280 / CIP 103535 / JIP02/86), this protein is Dihydroxy-acid dehydratase.